Reading from the N-terminus, the 265-residue chain is Phosphonates import ATP-binding protein PhnC 1 (265 aa).

Residues leucine 3–glutamine 247 form the ABC transporter domain. ATP is bound at residue glycine 36–threonine 43.

The protein belongs to the ABC transporter superfamily. Phosphonates importer (TC 3.A.1.9.1) family. As to quaternary structure, the complex is composed of two ATP-binding proteins (PhnC), two transmembrane proteins (PhnE) and a solute-binding protein (PhnD).

The protein resides in the cell inner membrane. It catalyses the reaction phosphonate(out) + ATP + H2O = phosphonate(in) + ADP + phosphate + H(+). In terms of biological role, part of the ABC transporter complex PhnCDE involved in phosphonates import. Responsible for energy coupling to the transport system. The polypeptide is Phosphonates import ATP-binding protein PhnC 1 (Pseudomonas syringae pv. syringae (strain B728a)).